We begin with the raw amino-acid sequence, 375 residues long: MKPLLGTFYLLGMLVPGWLGYDRSLTQQRQEVVDKVVSPWSILETYSYNRYHPMGEIYQWMSEIREKYTEVVTQHFLGMTYESRPMYYLKISQPSSNPKKIIWMDCGIHAREWIAPAFCQWFVKEILQNYEDNSRIRRLLKNLDFYVLPVLNIDGYIYTWTTDRLWRKSRSSHNNGTCFGTDLNRNFDASWCSIGASHNCESLTFCGTGPMSEPETKAVSSFIESKKENIACFLTMHSYGQLILVPYGYTKNKSNNHEELIQVGQKAANALKAKHGTNYRVGSSADILYATSGSSRDWARDIGIPFSYTFELRDNGTYGFVLPETQIQATCEETMEAVLSVLDDVYEKYWYTNSARKAKSTALVLGLLMSFMSLL.

The N-terminal stretch at 1 to 20 (MKPLLGTFYLLGMLVPGWLG) is a signal peptide. The Peptidase M14 domain occupies 50–345 (RYHPMGEIYQ…EAVLSVLDDV (296 aa)). 2 residues coordinate Zn(2+): histidine 109 and glutamate 112. An N-linked (GlcNAc...) asparagine glycan is attached at asparagine 175. Histidine 237 contributes to the Zn(2+) binding site. Asparagine 252 is a glycosylation site (N-linked (GlcNAc...) asparagine). Catalysis depends on glutamate 311, which acts as the Proton donor/acceptor. Residue asparagine 315 is glycosylated (N-linked (GlcNAc...) asparagine). Residue serine 354 is the site of GPI-anchor amidated serine attachment. Positions 355 to 375 (ARKAKSTALVLGLLMSFMSLL) are cleaved as a propeptide — removed in mature form.

The protein belongs to the peptidase M14 family. Zn(2+) serves as cofactor.

The protein resides in the apical cell membrane. Its function is as follows. Carboxypeptidase which preferentially cleaves C-terminal acidic residues from peptides and proteins. Can also cleave C-terminal hydrophobic amino acids, with a preference for small residues over large residues. This chain is Carboxypeptidase O, found in Bos taurus (Bovine).